A 294-amino-acid chain; its full sequence is MKFDNDSEKQVFDKLKKAIPGIIKEKCAGYDELYGYKLNPEGLTQEEVDKYYDEKIADRLTYKLCKAYQFEYSTIVQNLIDILNWRREFNPLSCAYKEVHNTELQNVGILTFDANGDANKKAVTWNLYGQLVKKKELFQNVDKFVRYRIGLMEKGLSLLDFTSSDNNYMTQVHDYKGVSVWRMDSDIKNCSKTVIGIFQKYYPELLYAKYFVNVPTVFGWVYDLIKKFVDETTRKKFVVLTDGSKLGQYLKDCPYEGYGGKDKKNNLTKQNVTNVHPTEYGLYILQKQIIEDVE.

The 167-residue stretch at 100–266 folds into the CRAL-TRIO domain; sequence HNTELQNVGI…GYGGKDKKNN (167 aa). Residues Y128, R148, H173, Y175, and K209 each contribute to the heme site.

The protein belongs to the SFH5 family. It depends on heme b as a cofactor.

It is found in the cytoplasm. The protein resides in the endoplasmic reticulum membrane. The protein localises to the microsome membrane. It carries out the reaction a 1,2-diacyl-sn-glycero-3-phospho-(1D-myo-inositol)(in) = a 1,2-diacyl-sn-glycero-3-phospho-(1D-myo-inositol)(out). Its function is as follows. Non-classical phosphatidylinositol (PtdIns) transfer protein (PITP), which exhibits PtdIns-binding/transfer activity in the absence of detectable PtdCho-binding/transfer activity. Regulates PtdIns(4,5)P2 homeostasis at the plasma membrane. Heme-binding protein that may play a role in organic oxidant-induced stress responses. This is Phosphatidylinositol transfer protein SFH5 (SFH5) from Saccharomyces cerevisiae (strain YJM789) (Baker's yeast).